The following is a 28-amino-acid chain: ARTQPGNIAPVGDFTLYPNAPRQGHIVA.

It belongs to the ribosome-inactivating protein family.

The enzyme catalyses Endohydrolysis of the N-glycosidic bond at one specific adenosine on the 28S rRNA.. Inhibits protein synthesis in animal cells. Does not possess ribonuclease activity. This chain is Ribosome-inactivating protein pleuturegin, found in Pleurotus tuber-regium (King tuber oyster mushroom).